We begin with the raw amino-acid sequence, 409 residues long: N-acetylglucosamine-6-phosphate deacetylase (409 aa).

Residue E143 coordinates a divalent metal cation. 154–155 is a substrate binding site; that stretch reads AH. Residues H211 and H232 each contribute to the a divalent metal cation site. Substrate is bound by residues 235 to 236, R243, and 269 to 272; these read NA and DGIH. The active-site Proton donor/acceptor is the D294. 328-330 is a substrate binding site; the sequence is LSG.

Belongs to the metallo-dependent hydrolases superfamily. NagA family. Requires a divalent metal cation as cofactor.

The enzyme catalyses N-acetyl-D-glucosamine 6-phosphate + H2O = D-glucosamine 6-phosphate + acetate. Its pathway is amino-sugar metabolism; N-acetylneuraminate degradation. Hydrolyzes the N-glycolyl group from N-glycolylglucosamine 6-phosphate (GlcNGc-6-P) in the N-glycolylneuraminic acid (Neu5Gc) degradation pathway. The chain is N-acetylglucosamine-6-phosphate deacetylase (Amdhd2) from Rattus norvegicus (Rat).